Reading from the N-terminus, the 460-residue chain is UDP-N-acetylmuramate--L-alanine ligase (460 aa).

118–124 (GAHGKTT) lines the ATP pocket.

The protein belongs to the MurCDEF family.

Its subcellular location is the cytoplasm. The enzyme catalyses UDP-N-acetyl-alpha-D-muramate + L-alanine + ATP = UDP-N-acetyl-alpha-D-muramoyl-L-alanine + ADP + phosphate + H(+). It functions in the pathway cell wall biogenesis; peptidoglycan biosynthesis. In terms of biological role, cell wall formation. The protein is UDP-N-acetylmuramate--L-alanine ligase of Clostridium botulinum (strain Eklund 17B / Type B).